A 195-amino-acid chain; its full sequence is Probable GTP-binding protein EngB (195 aa).

The region spanning 24 to 195 (ELPEIALAGR…EAWDAILEKL (172 aa)) is the EngB-type G domain. GTP-binding positions include 32-39 (GRSNVGKS), 59-63 (GKTQL), 77-80 (DVPG), 144-147 (TKAD), and 176-178 (FSS). Mg(2+) is bound by residues S39 and T61.

This sequence belongs to the TRAFAC class TrmE-Era-EngA-EngB-Septin-like GTPase superfamily. EngB GTPase family. Requires Mg(2+) as cofactor.

In terms of biological role, necessary for normal cell division and for the maintenance of normal septation. The polypeptide is Probable GTP-binding protein EngB (Streptococcus pneumoniae (strain Hungary19A-6)).